Reading from the N-terminus, the 332-residue chain is Transcription factor HBP-1b(c38) (332 aa).

Residues Met-1–Met-48 are disordered. Residues Ser-34–Thr-47 are compositionally biased toward basic and acidic residues. In terms of domain architecture, bZIP spans Asp-44–Ser-107. Residues Lys-46–Lys-66 are basic motif. The stretch at Thr-47–Asp-142 forms a coiled coil. Residues Leu-72–Leu-86 are leucine-zipper. The DOG1 domain occupies Ala-111 to Arg-329.

Belongs to the bZIP family. Binds DNA as a dimer.

It localises to the nucleus. Functionally, transcriptional activator that binds specifically to the DNA sequence 5'-TGACG-3'. Recognizes ocs elements like the as-1 motif of the cauliflower mosaic virus 35S promoter. Binding to the as-1-like cis elements mediate auxin- and salicylic acid-inducible transcription. Binds to the hexamer motif 5'-ACGTCA-3' of histone gene promoters. In Triticum aestivum (Wheat), this protein is Transcription factor HBP-1b(c38).